Consider the following 389-residue polypeptide: Aspartyl protease UND (389 aa).

The first 19 residues, 1-19 (MKTTMNFVFLFFLPLLINA), serve as a signal peptide directing secretion. The 326-residue stretch at 58 to 383 (FMAEIHFGSP…DLSAKTAYIN (326 aa)) folds into the Peptidase A1 domain. Aspartate 76 is a catalytic residue. A disulfide bond links cysteine 86 and cysteine 92. N-linked (GlcNAc...) asparagine glycosylation occurs at asparagine 238. Residue aspartate 268 is part of the active site. A disulfide bridge links cysteine 304 with cysteine 346.

It belongs to the peptidase A1 family.

Functionally, probable aspartic protease activated by the transcription factor MYB80. May participate in the regulation of the timing of tapetal programmed cell death (PCD) which is critical for pollen development. In Arabidopsis thaliana (Mouse-ear cress), this protein is Aspartyl protease UND.